A 422-amino-acid polypeptide reads, in one-letter code: Elongation factor 1-gamma (422 aa).

A GST N-terminal domain is found at 1–82; that stretch reads MALVLHAGKT…YVARLKADNP (82 aa). Residues 87 to 215 form the GST C-terminal domain; it reads SLIDYAHIEQ…VKQTESVPPV (129 aa). The disordered stretch occupies residues 210–269; the sequence is ESVPPVPSAKKPSQPKETKSKAKEEPKKEAKKEPAKPKAEAAEEVEEAPKPKPKNPLDLL. Positions 223-250 are enriched in basic and acidic residues; it reads QPKETKSKAKEEPKKEAKKEPAKPKAEA. One can recognise an EF-1-gamma C-terminal domain in the interval 262–422; that stretch reads PKNPLDLLPP…EALLDAKCFK (161 aa).

In terms of assembly, EF-1 is composed of four subunits: alpha, beta, delta, and gamma.

Its function is as follows. Probably plays a role in anchoring the complex to other cellular components. The sequence is that of Elongation factor 1-gamma from Prunus avium (Cherry).